Reading from the N-terminus, the 361-residue chain is Protein YIM1-2 (361 aa).

This sequence belongs to the YIM1 family.

The protein localises to the lipid droplet. Its subcellular location is the mitochondrion. The sequence is that of Protein YIM1-2 (YIM1-2) from Lachancea thermotolerans (strain ATCC 56472 / CBS 6340 / NRRL Y-8284) (Yeast).